The chain runs to 331 residues: L-lactate dehydrogenase A chain (331 aa).

NAD(+) is bound by residues 29–57 (GMVG…MEDK) and Arg98. Residues Arg105, Asn137, and Arg168 each coordinate substrate. Asn137 is a binding site for NAD(+). The Proton acceptor role is filled by His192. Thr247 is a binding site for substrate.

It belongs to the LDH/MDH superfamily. LDH family. As to quaternary structure, homotetramer.

The protein resides in the cytoplasm. It catalyses the reaction (S)-lactate + NAD(+) = pyruvate + NADH + H(+). The protein operates within fermentation; pyruvate fermentation to lactate; (S)-lactate from pyruvate: step 1/1. Its function is as follows. Interconverts simultaneously and stereospecifically pyruvate and lactate with concomitant interconversion of NADH and NAD(+). The protein is L-lactate dehydrogenase A chain (ldha) of Notothenia neglecta (Yellowbelly rockcod).